We begin with the raw amino-acid sequence, 209 residues long: Thymidine kinase (209 aa).

ATP contacts are provided by residues 9–16 and 88–91; these read AAMNAGKS and DEAQ. E89 acts as the Proton acceptor in catalysis. Zn(2+) is bound by residues C146, C148, C183, and H186.

The protein belongs to the thymidine kinase family. Homotetramer.

It is found in the cytoplasm. It catalyses the reaction thymidine + ATP = dTMP + ADP + H(+). The polypeptide is Thymidine kinase (Legionella pneumophila subsp. pneumophila (strain Philadelphia 1 / ATCC 33152 / DSM 7513)).